The sequence spans 389 residues: Probable transcription factor FL (389 aa).

Disordered regions lie at residues 1-41 (MDPN…ANVP) and 140-226 (EHDM…HPFV). The segment covering 19–39 (PPAPAPVPPPPPPPPPPPPAN) has biased composition (pro residues). Residues 159 to 180 (VTGKKQAKKGSAARKGKKARRK) show a composition bias toward basic residues. A Nuclear localization signal motif is present at residues 161 to 168 (GKKQAKKG). Acidic residues predominate over residues 190–201 (QEDEMDCCDEDG). DNA-binding regions lie at residues 221–225 (REHPF), 290–297 (NKPKMRHY), and 361–364 (YVPT).

It belongs to the FLO/LFY family. As to quaternary structure, interacts with APO1. In very young panicle but not in mature florets, mature leaves, roots or apical meristems.

The protein resides in the nucleus. Its function is as follows. Probable transcription factor. Together with APO1, involved in the temporal regulation of meristem size and identity during both vegetative and reproductive developments through interaction with APO1. Promotes flowering. The sequence is that of Probable transcription factor FL from Oryza sativa subsp. japonica (Rice).